The sequence spans 807 residues: Ribosome-releasing factor 2, mitochondrial (807 aa).

A mitochondrion-targeting transit peptide spans 1–18 (MFCRKYAFQTWKQFSRFY). The tr-type G domain occupies 27–315 (SKTRNIGIIA…GITKYLPSPL (289 aa)). GTP contacts are provided by residues 36-43 (AHIDAGKT), 100-104 (DTPGH), and 154-157 (NKMD).

This sequence belongs to the TRAFAC class translation factor GTPase superfamily. Classic translation factor GTPase family. EF-G/EF-2 subfamily.

The protein localises to the mitochondrion. Functionally, mitochondrial GTPase that mediates the disassembly of ribosomes from messenger RNA at the termination of mitochondrial protein biosynthesis. Not involved in the GTP-dependent ribosomal translocation step during translation elongation. In Candida dubliniensis (strain CD36 / ATCC MYA-646 / CBS 7987 / NCPF 3949 / NRRL Y-17841) (Yeast), this protein is Ribosome-releasing factor 2, mitochondrial.